The following is a 351-amino-acid chain: Uroporphyrinogen decarboxylase (351 aa).

Residues 25–29 (RQAGR), aspartate 74, tyrosine 151, serine 206, and histidine 325 contribute to the substrate site.

The protein belongs to the uroporphyrinogen decarboxylase family. As to quaternary structure, homodimer.

It localises to the cytoplasm. The catalysed reaction is uroporphyrinogen III + 4 H(+) = coproporphyrinogen III + 4 CO2. It participates in porphyrin-containing compound metabolism; protoporphyrin-IX biosynthesis; coproporphyrinogen-III from 5-aminolevulinate: step 4/4. Functionally, catalyzes the decarboxylation of four acetate groups of uroporphyrinogen-III to yield coproporphyrinogen-III. This Chlorobium phaeobacteroides (strain BS1) protein is Uroporphyrinogen decarboxylase.